Consider the following 299-residue polypeptide: Taste receptor type 2 member 1 (299 aa).

Over 1 to 9 the chain is Extracellular; the sequence is MLESHLIIH. A helical membrane pass occupies residues 10 to 30; sequence FLLAVIQFLLGTFTNGIIVVV. The Cytoplasmic portion of the chain corresponds to 31–55; the sequence is NGIDLIKHRKMAPLDLLLSCLAVSR. The helical transmembrane segment at 56-76 threads the bilayer; it reads IFLQLFIFYVNVIVIFFIEFI. At 77 to 81 the chain is on the extracellular side; it reads MCSEN. Residues 82-102 traverse the membrane as a helical segment; the sequence is CAILLFINELELWLATWLGVF. The Cytoplasmic portion of the chain corresponds to 103–124; it reads YCAKVASVPHPLFIWLKMKISK. Residues 125 to 145 traverse the membrane as a helical segment; that stretch reads LVPWMILGSLLYVSMTCVFHS. The Extracellular portion of the chain corresponds to 146 to 178; it reads KYAGFMVPYFLRNFFSQNATIQKEDTPAIQIFS. N-linked (GlcNAc...) asparagine glycosylation is present at asparagine 163. Residues 179 to 199 form a helical membrane-spanning segment; it reads FVAEFLVPLLIFLVAVLLLIF. Residues 200–222 are Cytoplasmic-facing; that stretch reads SLGRHTRQMRNTVAGSRVPGRGA. Residues 223-243 form a helical membrane-spanning segment; it reads PISALLSILSFVILYFSHCMI. Over 244–257 the chain is Extracellular; sequence KVFLSSLKFHVRSF. A helical membrane pass occupies residues 258–278; it reads ILPFFILVIGIYPSGHSLILI. Over 279–299 the chain is Cytoplasmic; the sequence is LGNXKLKQNAKKFLLHSKCCQ.

It belongs to the G-protein coupled receptor T2R family.

It localises to the membrane. In terms of biological role, receptor that may play a role in the perception of bitterness and is gustducin-linked. May play a role in sensing the chemical composition of the gastrointestinal content. The activity of this receptor may stimulate alpha gustducin, mediate PLC-beta-2 activation and lead to the gating of TRPM5. This is Taste receptor type 2 member 1 (TAS2R1) from Pongo pygmaeus (Bornean orangutan).